Consider the following 170-residue polypeptide: Urease accessory protein UreE (170 aa).

This sequence belongs to the UreE family.

The protein resides in the cytoplasm. Its function is as follows. Involved in urease metallocenter assembly. Binds nickel. Probably functions as a nickel donor during metallocenter assembly. The protein is Urease accessory protein UreE of Helicobacter pylori (strain P12).